The primary structure comprises 115 residues: NADH-ubiquinone oxidoreductase chain 3 (115 aa).

Transmembrane regions (helical) follow at residues 4 to 24, 55 to 75, and 83 to 103; these read LTAL…AFWL, FFLV…LLPL, and YINI…LGLA.

The protein belongs to the complex I subunit 3 family. As to quaternary structure, core subunit of respiratory chain NADH dehydrogenase (Complex I) which is composed of 45 different subunits. Interacts with TMEM186. Interacts with TMEM242.

The protein localises to the mitochondrion inner membrane. It carries out the reaction a ubiquinone + NADH + 5 H(+)(in) = a ubiquinol + NAD(+) + 4 H(+)(out). In terms of biological role, core subunit of the mitochondrial membrane respiratory chain NADH dehydrogenase (Complex I) which catalyzes electron transfer from NADH through the respiratory chain, using ubiquinone as an electron acceptor. Essential for the catalytic activity of complex I. The sequence is that of NADH-ubiquinone oxidoreductase chain 3 from Peromyscus polionotus (Oldfield mouse).